A 239-amino-acid chain; its full sequence is MNKNIIIKSIGALTILTSITGVGTTMVEGIQQTAKAENTVKQITNTNVAPYSGVTWMGAGTGFVVGNHTIITNKHVTYHMKVGDEIKAHPNGFYNNGGGLYKVTKIVDYPGKEDIAVVQVEEKSTQPKGRKFKDFTSKFNIASEAKENEPISVIGYPNPNGNKLQMYESTGKVLSVNGNIVSSDAIIQPGSSGSPILNSKHEAIGVIYAGNKPSGESTRGFAVYFSPEIKKFIADNLDK.

A signal peptide spans 1–36; it reads MNKNIIIKSIGALTILTSITGVGTTMVEGIQQTAKA. Residues H75, D114, and S192 each act as charge relay system in the active site.

The protein belongs to the peptidase S1B family.

The protein resides in the secreted. This Staphylococcus aureus (strain USA300) protein is Serine protease SplF (splF).